The primary structure comprises 284 residues: Elongation factor Ts (284 aa).

Residues 80–83 are involved in Mg(2+) ion dislocation from EF-Tu; the sequence is TDFV.

This sequence belongs to the EF-Ts family.

It localises to the cytoplasm. In terms of biological role, associates with the EF-Tu.GDP complex and induces the exchange of GDP to GTP. It remains bound to the aminoacyl-tRNA.EF-Tu.GTP complex up to the GTP hydrolysis stage on the ribosome. The sequence is that of Elongation factor Ts from Neisseria gonorrhoeae (strain ATCC 700825 / FA 1090).